Consider the following 365-residue polypeptide: Probable L-tyrosine/L-aspartate decarboxylase (365 aa).

K224 bears the N6-(pyridoxal phosphate)lysine mark.

The protein belongs to the group II decarboxylase family. MfnA subfamily. Requires pyridoxal 5'-phosphate as cofactor.

The catalysed reaction is L-tyrosine + H(+) = tyramine + CO2. It catalyses the reaction L-aspartate + H(+) = beta-alanine + CO2. It functions in the pathway cofactor biosynthesis; methanofuran biosynthesis. It participates in cofactor biosynthesis; coenzyme A biosynthesis. In terms of biological role, catalyzes the decarboxylation of L-tyrosine to produce tyramine for methanofuran biosynthesis. Can also catalyze the decarboxylation of L-aspartate to produce beta-alanine for coenzyme A (CoA) biosynthesis. In Methanoculleus marisnigri (strain ATCC 35101 / DSM 1498 / JR1), this protein is Probable L-tyrosine/L-aspartate decarboxylase.